Here is a 134-residue protein sequence, read N- to C-terminus: Photosystem II assembly factor lipoprotein Psb27 (134 aa).

A signal peptide spans 1 to 21 (MKRFWAMVCALFLSVSLLLTS). Cysteine 22 is lipidated: N-palmitoyl cysteine. A lipid anchor (S-diacylglycerol cysteine) is attached at cysteine 22.

The protein belongs to the Psb27 family. As to quaternary structure, part of a photosystem II (PSII) assembly intermediate complex PSII-I; crystallized from a strain deleted of psbJ, it forms monomeric PSII before addition of the oxygen evolving complex. PSII-I includes 3 assembly factors not found in mature PSII (Psb27, Psb28 and Psb34). Binds to the lumenal side of PSII, adjacent to the CP43 (psbC) subunit.

The protein resides in the cellular thylakoid membrane. Its function is as follows. Plays a role in the repair and/or biogenesis of the calcium-manganese-oxide cluster on the lumenal face of the thylakoid membrane. Its presence in a photosystem II (PSII) preparation prevents binding of other extrinsic subunits PsbO, PsbU and PsbV, and thus assembly of calcium-manganese-oxide cluster. Psb27-containing complexes lack oxygen evolving activity and an oxidizable calcium-manganese-oxide cluster, but have a normal reaction center. This is Photosystem II assembly factor lipoprotein Psb27 from Thermosynechococcus vestitus (strain NIES-2133 / IAM M-273 / BP-1).